The sequence spans 325 residues: Tetraacyldisaccharide 4'-kinase (325 aa).

Position 55–62 (55–62) interacts with ATP; the sequence is TAGGNGKT.

This sequence belongs to the LpxK family.

The catalysed reaction is a lipid A disaccharide + ATP = a lipid IVA + ADP + H(+). It participates in glycolipid biosynthesis; lipid IV(A) biosynthesis; lipid IV(A) from (3R)-3-hydroxytetradecanoyl-[acyl-carrier-protein] and UDP-N-acetyl-alpha-D-glucosamine: step 6/6. In terms of biological role, transfers the gamma-phosphate of ATP to the 4'-position of a tetraacyldisaccharide 1-phosphate intermediate (termed DS-1-P) to form tetraacyldisaccharide 1,4'-bis-phosphate (lipid IVA). The chain is Tetraacyldisaccharide 4'-kinase from Salmonella arizonae (strain ATCC BAA-731 / CDC346-86 / RSK2980).